We begin with the raw amino-acid sequence, 334 residues long: Probable tRNA pseudouridine synthase B (334 aa).

D82 (nucleophile) is an active-site residue. The 76-residue stretch at 250 to 325 folds into the PUA domain; sequence LPKVWIRDSA…IAVDVDKVFM (76 aa).

It belongs to the pseudouridine synthase TruB family. Type 2 subfamily.

The catalysed reaction is uridine(55) in tRNA = pseudouridine(55) in tRNA. Functionally, could be responsible for synthesis of pseudouridine from uracil-55 in the psi GC loop of transfer RNAs. This Thermococcus gammatolerans (strain DSM 15229 / JCM 11827 / EJ3) protein is Probable tRNA pseudouridine synthase B.